A 418-amino-acid chain; its full sequence is Actin-related protein 3 (418 aa).

The residue at position 2 (Ala-2) is an N-acetylalanine. An N6-acetyllysine mark is found at Lys-240, Lys-244, Lys-251, and Lys-254.

The protein belongs to the actin family. ARP3 subfamily. As to quaternary structure, component of the Arp2/3 complex composed of ACTR2/ARP2, ACTR3/ARP3, ARPC1B/p41-ARC, ARPC2/p34-ARC, ARPC3/p21-ARC, ARPC4/p20-ARC and ARPC5/p16-ARC. Interacts with WHDC1. Interacts weakly with MEFV. Interacts with AVIL. (Microbial infection) Interacts with bacterium B.thailandensis BimA.

It is found in the cytoplasm. It localises to the cytoskeleton. The protein resides in the cell projection. The protein localises to the nucleus. In terms of biological role, ATP-binding component of the Arp2/3 complex, a multiprotein complex that mediates actin polymerization upon stimulation by nucleation-promoting factor (NPF). The Arp2/3 complex mediates the formation of branched actin networks in the cytoplasm, providing the force for cell motility. Seems to contact the pointed end of the daughter actin filament. In podocytes, required for the formation of lamellipodia downstream of AVIL and PLCE1 regulation. In addition to its role in the cytoplasmic cytoskeleton, the Arp2/3 complex also promotes actin polymerization in the nucleus, thereby regulating gene transcription and repair of damaged DNA. The Arp2/3 complex promotes homologous recombination (HR) repair in response to DNA damage by promoting nuclear actin polymerization, leading to drive motility of double-strand breaks (DSBs). Plays a role in ciliogenesis. This is Actin-related protein 3 (Actr3) from Mus musculus (Mouse).